The following is a 161-amino-acid chain: ATP synthase subunit b 1 (161 aa).

Residues 3–23 form a helical membrane-spanning segment; it reads LDATFYALVGLILFFVLIAYL.

This sequence belongs to the ATPase B chain family. F-type ATPases have 2 components, F(1) - the catalytic core - and F(0) - the membrane proton channel. F(1) has five subunits: alpha(3), beta(3), gamma(1), delta(1), epsilon(1). F(0) has three main subunits: a(1), b(2) and c(10-14). The alpha and beta chains form an alternating ring which encloses part of the gamma chain. F(1) is attached to F(0) by a central stalk formed by the gamma and epsilon chains, while a peripheral stalk is formed by the delta and b chains.

Its subcellular location is the cell inner membrane. Functionally, f(1)F(0) ATP synthase produces ATP from ADP in the presence of a proton or sodium gradient. F-type ATPases consist of two structural domains, F(1) containing the extramembraneous catalytic core and F(0) containing the membrane proton channel, linked together by a central stalk and a peripheral stalk. During catalysis, ATP synthesis in the catalytic domain of F(1) is coupled via a rotary mechanism of the central stalk subunits to proton translocation. In terms of biological role, component of the F(0) channel, it forms part of the peripheral stalk, linking F(1) to F(0). The sequence is that of ATP synthase subunit b 1 from Sinorhizobium medicae (strain WSM419) (Ensifer medicae).